Reading from the N-terminus, the 383-residue chain is Acetylornithine deacetylase (383 aa).

Histidine 80 serves as a coordination point for Zn(2+). Residue aspartate 82 is part of the active site. Aspartate 112 contacts Zn(2+). Residue glutamate 144 is part of the active site. Positions 145, 169, and 355 each coordinate Zn(2+).

It belongs to the peptidase M20A family. ArgE subfamily. Homodimer. Zn(2+) is required as a cofactor. Requires Co(2+) as cofactor. Glutathione serves as cofactor.

The protein resides in the cytoplasm. It catalyses the reaction N(2)-acetyl-L-ornithine + H2O = L-ornithine + acetate. The protein operates within amino-acid biosynthesis; L-arginine biosynthesis; L-ornithine from N(2)-acetyl-L-ornithine (linear): step 1/1. Catalyzes the hydrolysis of the amide bond of N(2)-acetylated L-amino acids. Cleaves the acetyl group from N-acetyl-L-ornithine to form L-ornithine, an intermediate in L-arginine biosynthesis pathway, and a branchpoint in the synthesis of polyamines. This chain is Acetylornithine deacetylase, found in Salmonella choleraesuis (strain SC-B67).